The chain runs to 679 residues: MTKDLLLELGLEELPAYVVTPSEKQLGQKMVKFLEDHRLSFETVQIFSTPRRLAVRVKGLADQQTDLTEDFKGPSKKIALDAEGNFSKAAQGFVRGKGLSVDDIEFREVKGEEYVYVTKHETGKSAIDVLASVTEVLTELTFPVNMHWANNSFEYIRPVHTLVVLLDDQALELDFLDIHSGRISRGHRFLGSDTEISSASSYEDDLRQQFVIADAKERQQMIVNQIHAIEEKKNISVEIDEDLLNEVLNLVEYPTAFLGSFDEKYLDVPEEVLVTSMKNHQRYFVVRDRDGKLLPNFISVRNGNAEHIENVIKGNEKVLVARLEDGEFFWQEDQKLNIADLVEKLKQVTFHEKIGSLYEHMDRVKVISQYLAEKADLSDEEKLAVLRAASIYKFDLLTGMVDEFDELQGIMGEKYALLAGEQPAVAAAIREHYMPTSADGELPETRVGAILALADKFDTLLSFFSVGLIPSGSNDPYALRRATQGIVRILEAFGWDIPLDELVTNLYGLSFASLDYANQKEVMAFISARIEKMIGSKVPKDIREAVLESDTYIVSLILEASQALVQKSKDAQYKVSVESLSRAFNLAEKVTHSVLVDSSLFENNQEKALYQAILSLELTEDMHDNLDKLFALSPIINDFFDNTMVMTDDEKMKQNRLAILNSLVAKARTVAAFNLLNTK.

Belongs to the class-II aminoacyl-tRNA synthetase family. As to quaternary structure, tetramer of two alpha and two beta subunits.

It is found in the cytoplasm. It carries out the reaction tRNA(Gly) + glycine + ATP = glycyl-tRNA(Gly) + AMP + diphosphate. This Streptococcus agalactiae serotype V (strain ATCC BAA-611 / 2603 V/R) protein is Glycine--tRNA ligase beta subunit.